The primary structure comprises 464 residues: Cysteine--tRNA ligase (464 aa).

Residue Cys-28 participates in Zn(2+) binding. Positions 30-40 (VTVYDFCHIGH) match the 'HIGH' region motif. 3 residues coordinate Zn(2+): Cys-209, His-234, and Glu-238. Positions 266–270 (KMSKS) match the 'KMSKS' region motif. Lys-269 is a binding site for ATP.

Belongs to the class-I aminoacyl-tRNA synthetase family. In terms of assembly, monomer. Requires Zn(2+) as cofactor.

It is found in the cytoplasm. The catalysed reaction is tRNA(Cys) + L-cysteine + ATP = L-cysteinyl-tRNA(Cys) + AMP + diphosphate. The polypeptide is Cysteine--tRNA ligase (cysS) (Buchnera aphidicola subsp. Acyrthosiphon pisum (strain APS) (Acyrthosiphon pisum symbiotic bacterium)).